We begin with the raw amino-acid sequence, 145 residues long: Deoxyuridine 5'-triphosphate nucleotidohydrolase (145 aa).

Substrate is bound by residues 62-64 (RSG), Asn-75, 79-81 (TVD), and Lys-89.

The protein belongs to the dUTPase family. Mg(2+) is required as a cofactor.

It carries out the reaction dUTP + H2O = dUMP + diphosphate + H(+). Its pathway is pyrimidine metabolism; dUMP biosynthesis; dUMP from dCTP (dUTP route): step 2/2. In terms of biological role, this enzyme is involved in nucleotide metabolism: it produces dUMP, the immediate precursor of thymidine nucleotides and it decreases the intracellular concentration of dUTP so that uracil cannot be incorporated into DNA. This chain is Deoxyuridine 5'-triphosphate nucleotidohydrolase, found in Helicobacter pylori (strain Shi470).